A 390-amino-acid polypeptide reads, in one-letter code: Homoserine O-succinyltransferase (390 aa).

Residues 59 to 369 (NAVLVCHALN…PHGHDAFLLD (311 aa)) form the AB hydrolase-1 domain. S165 (nucleophile) is an active-site residue. R235 contacts substrate. Residues D330 and H363 contribute to the active site. D364 is a binding site for substrate.

It belongs to the AB hydrolase superfamily. MetX family. As to quaternary structure, homodimer.

Its subcellular location is the cytoplasm. It catalyses the reaction L-homoserine + succinyl-CoA = O-succinyl-L-homoserine + CoA. It functions in the pathway amino-acid biosynthesis; L-methionine biosynthesis via de novo pathway; O-succinyl-L-homoserine from L-homoserine: step 1/1. Its function is as follows. Transfers a succinyl group from succinyl-CoA to L-homoserine, forming succinyl-L-homoserine. This chain is Homoserine O-succinyltransferase, found in Cupriavidus pinatubonensis (strain JMP 134 / LMG 1197) (Cupriavidus necator (strain JMP 134)).